The following is a 538-amino-acid chain: ATP-dependent rRNA helicase RRP3 (538 aa).

A compositionally biased stretch (basic residues) spans 1–11 (MSSAKRVKLSH). A disordered region spans residues 1–112 (MSSAKRVKLS…SKEETPTKSF (112 aa)). Over residues 34-47 (KKITQAPKAAAPIK) the composition is skewed to low complexity. Positions 53 to 85 (AEEDDDDDDKDDKDEEDEEQNDDSSDEASENDD) are enriched in acidic residues. The segment covering 92 to 112 (EATKEGQTELPSKEETPTKSF) has biased composition (basic and acidic residues). The Q motif motif lies at 110 to 138 (KSFRDLGIVEPLCEACEALKFKKPTPIQE). Residues 141-312 (IPLALQGRDV…RASLRDPLKV (172 aa)) enclose the Helicase ATP-binding domain. Residue 154–161 (AETGSGKT) participates in ATP binding. Positions 260–263 (DEAD) match the DEAD box motif. Residues 336–486 (HKDVYLIYLA…LFQPDKEEVM (151 aa)) form the Helicase C-terminal domain. Positions 498-512 (HAREEMKALHEDRGK) are enriched in basic and acidic residues. The segment at 498 to 538 (HAREEMKALHEDRGKKGAVLKGRKRGSATKRRHDDMDAEEG) is disordered. Positions 513–528 (KGAVLKGRKRGSATKR) are enriched in basic residues.

It belongs to the DEAD box helicase family. DDX47/RRP3 subfamily. As to quaternary structure, interacts with the SSU processome.

Its subcellular location is the nucleus. The catalysed reaction is ATP + H2O = ADP + phosphate + H(+). Its function is as follows. ATP-dependent rRNA helicase required for pre-ribosomal RNA processing. Involved in the maturation of the 35S-pre-rRNA and to its cleavage to mature 18S rRNA. This is ATP-dependent rRNA helicase RRP3 from Pyricularia oryzae (strain 70-15 / ATCC MYA-4617 / FGSC 8958) (Rice blast fungus).